The following is an 835-amino-acid chain: MLIAQNWVTGLLGHANEGWKVPSSDLDSGYVRVGFETEGYWPIPETTGPLVFGRVETIEELTEFKKPIRHCHVNVGDANGTGELQSIVCGARNFKEGDTVVVSLPGAVLPGDFAISARETYGRMSAGMICSASELGLADKQNSGIITLDPSYGEPGEDARQALGLEDTVFDVNVTPDRGYALSARGLTRELASAFSLTFTDPAIEPAVAGIEVKVPAVEGSLINVELREETKAIRFGLRKVSGIDPAAESPFWMQRELMLSGQRPVNAATDVTNYVMLLLGQPMHAFDAAKVTGDLVVRNATAGEKFETLDHVKRTLNEEDVVITDDNGIQSLAGVMGGLTSEISDTTTDVYFEAATWDTITVARTSRRHKLSSEASRRFERGVDPAIVEIALDIAATLLVEIAGGTVDAGRTLVGDVPAMQPITMKVTRPSELAGVDYSAETVIARLEEVGCTVAVSGDTLEVTPPTWRGDLTMSADLVEEVLRLEGLEAIPTIIPTAPAGRGLTDAQKRRRAVGHALAYAGYAEIIPSPFMDPEVFDVWGLAADDERRKTVSVLNPLEAERNVLSTSLLPSMLDAVKRNVARGHNDFSLFGLQQVAFEHGSGVSPMPSVASRPEESVVAELVDSLPNQPLHVATVGTGNIEFEGPWGKGRAYTFADAIESARAVARAAGVTLELANADALPWHPGRCAALLIDGTPVGYAGELHPQILEKAGLPARTCAMELDLSALPLVENLPAPVLSSFPALHQDIALVVDETIPAEDVRAVVEAGAGELIETVELFDVYRSEQLGENKKSLAFSLRFRATDRTLTDEEANEARLQAAELAKEKFNAEMRG.

In terms of domain architecture, tRNA-binding spans 44-160 (PETTGPLVFG…SYGEPGEDAR (117 aa)). A B5 domain is found at 419 to 494 (PAMQPITMKV…RLEGLEAIPT (76 aa)). 4 residues coordinate Mg(2+): D472, D478, E481, and E482. Residues 741–834 (SSFPALHQDI…AKEKFNAEMR (94 aa)) form the FDX-ACB domain.

The protein belongs to the phenylalanyl-tRNA synthetase beta subunit family. Type 1 subfamily. As to quaternary structure, tetramer of two alpha and two beta subunits. The cofactor is Mg(2+).

It localises to the cytoplasm. The catalysed reaction is tRNA(Phe) + L-phenylalanine + ATP = L-phenylalanyl-tRNA(Phe) + AMP + diphosphate + H(+). In Corynebacterium glutamicum (strain ATCC 13032 / DSM 20300 / JCM 1318 / BCRC 11384 / CCUG 27702 / LMG 3730 / NBRC 12168 / NCIMB 10025 / NRRL B-2784 / 534), this protein is Phenylalanine--tRNA ligase beta subunit.